A 296-amino-acid polypeptide reads, in one-letter code: Probable endonuclease 4 (296 aa).

Zn(2+)-binding residues include His-69, His-109, Glu-160, Asp-194, His-197, His-231, Asp-244, His-246, and Glu-276.

Belongs to the AP endonuclease 2 family. Requires Zn(2+) as cofactor.

It carries out the reaction Endonucleolytic cleavage to 5'-phosphooligonucleotide end-products.. Functionally, endonuclease IV plays a role in DNA repair. It cleaves phosphodiester bonds at apurinic or apyrimidinic (AP) sites, generating a 3'-hydroxyl group and a 5'-terminal sugar phosphate. This chain is Probable endonuclease 4, found in Sulfurovum sp. (strain NBC37-1).